Here is a 145-residue protein sequence, read N- to C-terminus: ATP synthase epsilon chain (145 aa).

The protein belongs to the ATPase epsilon chain family. F-type ATPases have 2 components, CF(1) - the catalytic core - and CF(0) - the membrane proton channel. CF(1) has five subunits: alpha(3), beta(3), gamma(1), delta(1), epsilon(1). CF(0) has three main subunits: a, b and c.

The protein resides in the cell inner membrane. Its function is as follows. Produces ATP from ADP in the presence of a proton gradient across the membrane. The polypeptide is ATP synthase epsilon chain (Francisella tularensis subsp. holarctica (strain FTNF002-00 / FTA)).